Reading from the N-terminus, the 121-residue chain is Parathyroid hormone 4 (121 aa).

The first 24 residues, 1–24, serve as a signal peptide directing secretion; sequence MLKMQRSQQRVALMMLMVVAAVHC. A propeptide spanning residues 25 to 29 is cleaved from the precursor; the sequence is QESES. The segment at 77-97 is disordered; sequence RSRGAQLYSQPGREESSGGQK.

The protein belongs to the parathyroid hormone family. As to expression, specifically expressed in a bilateral cluster of neurons in the dorsal region of the periventricular hypothalamus. Their axons project through the midbrain and hindbrain and down the spinal cord.

The protein localises to the secreted. Its function is as follows. Neuroendocrine peptide which is produced by a subset of neurons in the hypothalamus. Activates the G-protein coupled receptors pth1ra, pth1rb and pth2r with similar affinity. Receptor binding stimulates intracellular cAMP production. Plays a role in bone mineralization by regulating expression of factors involved in phosphate homeostasis. Important for embryonic bone development. This Danio rerio (Zebrafish) protein is Parathyroid hormone 4.